We begin with the raw amino-acid sequence, 362 residues long: Nicotinate-nucleotide--dimethylbenzimidazole phosphoribosyltransferase (362 aa).

E321 (proton acceptor) is an active-site residue.

Belongs to the CobT family.

It catalyses the reaction 5,6-dimethylbenzimidazole + nicotinate beta-D-ribonucleotide = alpha-ribazole 5'-phosphate + nicotinate + H(+). It participates in nucleoside biosynthesis; alpha-ribazole biosynthesis; alpha-ribazole from 5,6-dimethylbenzimidazole: step 1/2. In terms of biological role, catalyzes the synthesis of alpha-ribazole-5'-phosphate from nicotinate mononucleotide (NAMN) and 5,6-dimethylbenzimidazole (DMB). The polypeptide is Nicotinate-nucleotide--dimethylbenzimidazole phosphoribosyltransferase (Clostridium tetani (strain Massachusetts / E88)).